The following is a 757-amino-acid chain: Endonuclease MutS2 (757 aa).

Position 321–328 (321–328) interacts with ATP; the sequence is GPNMGGKT. Positions 681–756 constitute a Smr domain; sequence IDIRGMTVEE…GTGVTVVEVK (76 aa).

Belongs to the DNA mismatch repair MutS family. MutS2 subfamily. As to quaternary structure, homodimer. Binds to stalled ribosomes, contacting rRNA.

Its function is as follows. Endonuclease that is involved in the suppression of homologous recombination and thus may have a key role in the control of bacterial genetic diversity. Functionally, acts as a ribosome collision sensor, splitting the ribosome into its 2 subunits. Detects stalled/collided 70S ribosomes which it binds and splits by an ATP-hydrolysis driven conformational change. Acts upstream of the ribosome quality control system (RQC), a ribosome-associated complex that mediates the extraction of incompletely synthesized nascent chains from stalled ribosomes and their subsequent degradation. Probably generates substrates for RQC. This chain is Endonuclease MutS2, found in Thermotoga sp. (strain RQ2).